A 200-amino-acid chain; its full sequence is ATP synthase subunit s, mitochondrial (200 aa).

The transit peptide at 1–25 (MMMFGKISRQLCSLKKIPWSCDSRY) directs the protein to the mitochondrion. The tract at residues 1–61 (MMMFGKISRQ…SEWLLRCGAK (61 aa)) is N-terminal domain. Mg(2+) is bound at residue G59. LRR repeat units lie at residues 62–87 (VRYCGHQKWLHDYNTLPGSSIDRYKI), 88–116 (QAIDATDSCIMDIGLDHMVGLEHVEKITL), 117–141 (CKCHYIEDNCLQRLSQLENLRKSLL), and 142–173 (ELEIIACGNVTDNGVIALRHFRNLKYLFLSDL). T93 provides a ligand contact to Mg(2+).

This sequence belongs to the ATP synthase subunit s family. As to quaternary structure, homotetramer. Associates with ATP synthase.

The protein resides in the mitochondrion. It is found in the mitochondrion inner membrane. In terms of biological role, involved in regulation of mitochondrial membrane ATP synthase. Necessary for H(+) conduction of ATP synthase. Facilitates energy-driven catalysis of ATP synthesis by blocking a proton leak through an alternative proton exit pathway. This Mus musculus (Mouse) protein is ATP synthase subunit s, mitochondrial (Dmac2l).